A 412-amino-acid polypeptide reads, in one-letter code: Major facilitator superfamily domain-containing protein 3 (412 aa).

12 helical membrane-spanning segments follow: residues 10–30 (GLYL…PVLL), 40–60 (VGLA…APLV), 73–93 (STAG…PGAG), 94–114 (QAGL…GAAM), 138–158 (VQVV…LALL), 166–186 (LFLL…AAPA), 209–229 (VLAV…KLGE), 250–270 (LGLW…SLGG), 291–311 (LGGL…GASM), 321–341 (ALLS…VTFT), 361–381 (LLAT…GGLA), and 384–404 (LGPH…VLYL).

It belongs to the major facilitator superfamily.

It is found in the membrane. The chain is Major facilitator superfamily domain-containing protein 3 (MFSD3) from Homo sapiens (Human).